Reading from the N-terminus, the 272-residue chain is Magnetosome protein MamQ (272 aa).

The Cytoplasmic portion of the chain corresponds to methionine 1–proline 46. The helical transmembrane segment at valine 47 to methionine 67 threads the bilayer. Residues arginine 68–asparagine 272 are Lumenal-facing.

This sequence belongs to the LemA family.

The protein resides in the magnetosome membrane. It is found in the cell inner membrane. In terms of biological role, essential for magnetosome formation. Not essential for formation of magnetosome membrane vesicles. One of 7 genes (mamLQBIEMO) able to induce magnetosome membrane biogenesis; coexpression of mamLQRBIEMO in a deletion of the 17 gene mamAB operon restores magnetosome vesicle formation but not magnetite biosynthesis. The sequence is that of Magnetosome protein MamQ from Magnetospirillum gryphiswaldense (strain DSM 6361 / JCM 21280 / NBRC 15271 / MSR-1).